We begin with the raw amino-acid sequence, 236 residues long: 6-carboxyhexanoate--CoA ligase (236 aa).

It belongs to the BioW family. As to quaternary structure, homodimer. The cofactor is Mg(2+).

The catalysed reaction is heptanedioate + ATP + CoA = 6-carboxyhexanoyl-CoA + AMP + diphosphate. It participates in metabolic intermediate metabolism; pimeloyl-CoA biosynthesis; pimeloyl-CoA from pimelate: step 1/1. Its function is as follows. Catalyzes the transformation of pimelate into pimeloyl-CoA with concomitant hydrolysis of ATP to AMP. This is 6-carboxyhexanoate--CoA ligase from Methanococcus aeolicus (strain ATCC BAA-1280 / DSM 17508 / OCM 812 / Nankai-3).